The primary structure comprises 98 residues: NADH-ubiquinone oxidoreductase chain 4L (98 aa).

2 consecutive transmembrane segments (helical) span residues Met-1–Leu-21 and Pro-48–Ala-68.

Belongs to the complex I subunit 4L family. Core subunit of respiratory chain NADH dehydrogenase (Complex I) which is composed of 45 different subunits.

The protein resides in the mitochondrion inner membrane. The catalysed reaction is a ubiquinone + NADH + 5 H(+)(in) = a ubiquinol + NAD(+) + 4 H(+)(out). In terms of biological role, core subunit of the mitochondrial membrane respiratory chain NADH dehydrogenase (Complex I) which catalyzes electron transfer from NADH through the respiratory chain, using ubiquinone as an electron acceptor. Part of the enzyme membrane arm which is embedded in the lipid bilayer and involved in proton translocation. This chain is NADH-ubiquinone oxidoreductase chain 4L (mt-nd4l), found in Xenopus laevis (African clawed frog).